A 422-amino-acid polypeptide reads, in one-letter code: Glycine amidinotransferase, mitochondrial (422 aa).

Catalysis depends on residues aspartate 253 and histidine 302. The active-site Amidino-cysteine intermediate is cysteine 406.

Belongs to the amidinotransferase family. In terms of assembly, homodimer. As to expression, strongly expressed in neurons and glia of the brain, the lamina propria, submucosa and serosa of the small intestine, in oocytes and on the fringes of the pancreas. Not expressed in the retina, eye lens, heart or bulbus arteriosus. Expressed in the yolk syncytial layer in gastrula stage embryos, in the yolk syncytial layer and mature somites in early segmentation embryos and in the yolk syncytial layer and the liver of long-pec stage (48 hours post-fertilization) embryos.

It is found in the mitochondrion inner membrane. It catalyses the reaction L-arginine + glycine = guanidinoacetate + L-ornithine. Its pathway is amine and polyamine biosynthesis; creatine biosynthesis; creatine from L-arginine and glycine: step 1/2. Its function is as follows. Catalyzes the biosynthesis of guanidinoacetate, the immediate precursor of creatine. Creatine plays a vital role in energy metabolism in muscle tissues. May play a role in embryonic and central nervous system development. The protein is Glycine amidinotransferase, mitochondrial of Danio rerio (Zebrafish).